The following is a 530-amino-acid chain: Probable cytochrome P450 519A1 (530 aa).

Residues 1–21 (MESIINLIFYIIIFLILIDFL) traverse the membrane as a helical segment. Residue Cys476 coordinates heme.

Belongs to the cytochrome P450 family. It depends on heme as a cofactor.

It localises to the membrane. The protein is Probable cytochrome P450 519A1 (cyp519A1) of Dictyostelium discoideum (Social amoeba).